The chain runs to 176 residues: MNKDDDKEGLAMFSALIDGIKPITQNKRHFRTPLKTKQEIELKEQQLHANSYFSDTYQPLLPVQGPMRWLEEGVDSLELKRLRRGDYQPDLLLDLHGYRQSEAKLELAALIQACVKQQSLCCCIMHGYGSGILKQQVPMWLVQHPMVKAFHQAPKEWGGDAALLVLIDIGEQPHRR.

The 76-residue stretch at 93–168 (LDLHGYRQSE…GDAALLVLID (76 aa)) folds into the Smr domain.

Belongs to the SmrB family. In terms of assembly, associates with collided ribosomes, but not with correctly translating polysomes.

Acts as a ribosome collision sensor. Detects stalled/collided disomes (pairs of ribosomes where the leading ribosome is stalled and a second ribosome has collided with it) and endonucleolytically cleaves mRNA at the 5' boundary of the stalled ribosome. Stalled/collided disomes form a new interface (primarily via the 30S subunits) that binds SmrB. Cleaved mRNA becomes available for tmRNA ligation, leading to ribosomal subunit dissociation and rescue of stalled ribosomes. The protein is Ribosome rescue factor SmrB of Shewanella baltica (strain OS223).